The sequence spans 1214 residues: Sodium bicarbonate cotransporter 3 (1214 aa).

The segment covering 1 to 12 (MERFRLEKKLPG) has biased composition (basic and acidic residues). Disordered stretches follow at residues 1–22 (MERF…VDLG) and 52–93 (SKES…PSQR). The Extracellular segment spans residues 1–608 (MERFRLEKKL…DFKDALSLQC (608 aa)). 6 positions are modified to phosphoserine: serine 52, serine 55, serine 84, serine 150, leucine 165, and cysteine 168. Residues 55-72 (SRRRHRHRGHKHHHRRRK) are compositionally biased toward basic residues. The span at 73-85 (DKESDKEDGRESP) shows a compositional bias: basic and acidic residues. A glycan (N-linked (GlcNAc...) asparagine) is linked at asparagine 171. Phosphoserine is present on residues serine 233, serine 242, serine 255, arginine 258, serine 260, threonine 263, glycine 264, and alanine 267. N-linked (GlcNAc...) asparagine glycosylation is present at asparagine 269. Disordered stretches follow at residues 289-346 (SRAG…IPTV), 362-408 (EEQK…ENST), and 552-572 (FHNG…HHAG). Over residues 303 to 313 (VPTPQNSPPSS) the composition is skewed to pro residues. Residues 314–332 (PSISRLTSRSSQESQRQAP) show a composition bias toward low complexity. A compositionally biased stretch (polar residues) spans 379 to 392 (SPQSAPGNLDNSKS). Serine 382 bears the Phosphoserine mark. Asparagine 398 is a glycosylation site (N-linked (GlcNAc...) asparagine). Phosphoserine occurs at positions 400 and 403. N-linked (GlcNAc...) asparagine glycosylation occurs at asparagine 406. Serine 407 and serine 556 each carry phosphoserine. Threonine 557 is subject to Phosphothreonine. A compositionally biased stretch (basic and acidic residues) spans 563-572 (TPKEAAHHAG). Residues 609 to 629 (LASILFLYCACMSPVITFGGL) traverse the membrane as a helical segment. Over 630–637 (LGEATEGR) the chain is Cytoplasmic. The helical transmembrane segment at 638-658 (ISAIESLFGASLTGIAYSLFA) threads the bilayer. The Extracellular segment spans residues 659 to 695 (GQPLTILGSTGPVLVFEKILYKFCRDYQLSYLSLRTS). The helical transmembrane segment at 696–716 (IGLWTSFLCIVLVATDASSLV) threads the bilayer. The Cytoplasmic segment spans residues 717–725 (CYITRFTEE). The helical transmembrane segment at 726-746 (AFAALICIIFIYEALEKLFDL) threads the bilayer. Lysine 742 bears the Phosphoserine mark. At 747–817 (GETYAFNMHN…VFLGSACGHH (71 aa)) the chain is on the extracellular side. Residues cysteine 766 and cysteine 768 are joined by a disulfide bond. 2 positions are modified to phosphoserine: proline 771 and proline 774. Asparagine 776 carries N-linked (GlcNAc...) asparagine glycosylation. Alanine 780 bears the Phosphoserine mark. Asparagine 786 and asparagine 791 each carry an N-linked (GlcNAc...) asparagine glycan. Cysteine 802 and cysteine 814 are joined by a disulfide. Residues 818-838 (GPYIPDVLFWCVILFFTTFFL) form a helical membrane-spanning segment. Residues 839 to 861 (SSFLKQFKTKRYFPTKVRSTISD) are Cytoplasmic-facing. A helical transmembrane segment spans residues 862 to 882 (FAVFLTIVIMVTIDYLVGVPS). Residues 883 to 908 (PKLHVPEKFEPTHPERGWIISPLGDN) are Extracellular-facing. Residues 909-929 (PWWTLLIAAIPALLCTILIFM) traverse the membrane as a helical segment. Over 930–954 (DQQITAVIINRKEHKLKKGAGYHLD) the chain is Cytoplasmic. The helical transmembrane segment at 955–975 (LLMVGVMLGVCSVMGLPWFVA) threads the bilayer. Topologically, residues 976–1011 (ATVLSISHVNSLKVESECSAPGEQPKFLGIREQRVT) are extracellular. 3 positions are modified to phosphoserine: glutamate 1007, valine 1010, and phenylalanine 1016. 2 essential for cell membrane localization and transport activity regions span residues 1008–1131 (QRVT…KREL) and 1127–1214 (TKRE…ETSL). A helical transmembrane segment spans residues 1012 to 1032 (GLMIFILMGLSVFMTSVLKFI). At 1033 to 1034 (PM) the chain is on the cytoplasmic side. Residues 1035–1055 (PVLYGVFLYMGVSSLKGIQLF) traverse the membrane as a helical segment. Topologically, residues 1056-1092 (DRIKLFGMPAKHQPDLIYLRYVPLWKVHIFTVIQLTC) are extracellular. Phosphoserine occurs at positions 1073, 1077, 1102, 1105, 1106, 1109, 1111, and 1115. Residues 1093–1113 (LVLLWVIKVSAAAVVFPMMVL) form a helical membrane-spanning segment. The Cytoplasmic portion of the chain corresponds to 1114–1214 (ALVFVRKLMD…KKYVDAETSL (101 aa)). The tract at residues 1134–1136 (LDD) is CA2-binding. A compositionally biased stretch (basic and acidic residues) spans 1144–1162 (KKEDDKKKKEKEEAERMLQ). Residues 1144–1169 (KKEDDKKKKEKEEAERMLQDDDDTVH) form a disordered region. Threonine 1167 bears the Phosphothreonine mark. A phosphoserine mark is found at serine 1176, serine 1188, aspartate 1201, and serine 1213. The PDZ-binding motif lies at 1211–1214 (ETSL).

The protein belongs to the anion exchanger (TC 2.A.31) family. Interacts with CFTR through NHERF1/EBP50. Interacts with USH1C. Forms a complex with ATP6V1B1 and NHERF1/EBP50. Interacts in a pH dependent-manner with CA2/carbonic anhydrase 2. As to expression, highly expressed in testis and spleen. Also expressed in retina, colon, small intestine, ovary, thymus, prostate, muscle, heart and kidney. In terms of tissue distribution, expressed in skeletal muscle and heart muscle.

It localises to the basolateral cell membrane. Its subcellular location is the apical cell membrane. The protein localises to the cell projection. It is found in the stereocilium. The protein resides in the cell membrane. It carries out the reaction hydrogencarbonate(in) + Na(+)(in) = hydrogencarbonate(out) + Na(+)(out). With respect to regulation, transporter activity is regulated by CA2/carbonic anhydrase 2, cAMP and PKA. Insensitive to stilbene derivatives. Inhibited by 5-(N-ethyl-N-isopropyl)-amiloride (EIPA). In terms of biological role, electroneutral sodium- and bicarbonate-dependent cotransporter with a Na(+):HCO3(-) 1:1 stoichiometry. Mediates the sodium-dependent bicarbonate transport important for pH recovery after acid load as well as for regulation of steady-state pH in the duodenum and vascular smooth muscle cells. Plays a key role in macrophage acidification, mediating bicarbonate import into the cytoplasm which is crucial for net acid extrusion and maintenance of cytoplasmic pH during phagocytosis. Provides cellular bicarbonate for de novo purine and pyrimidine synthesis and is a key mediator of de novo nucleotide synthesis downstream of mTORC1 signaling in proliferating cells. Its function is as follows. Plays a key role in macrophage acidification, mediating bicarbonate import into the cytoplasm which is crucial for net acid extrusion and maintenance of cytoplasmic pH during phagocytosis. In Homo sapiens (Human), this protein is Sodium bicarbonate cotransporter 3 (SLC4A7).